A 706-amino-acid chain; its full sequence is Coiled-coil domain-containing protein 177 (706 aa).

Positions 1 to 11 are enriched in acidic residues; it reads MVDPVPEEEKE. 3 disordered regions span residues 1–63, 179–262, and 268–287; these read MVDP…GGRR, ASAL…LREL, and ASARNSCPAGSASSAPNPLG. Composition is skewed to low complexity over residues 28–49 and 179–209; these read PPDAQGAQQPAASSASASAAAP and ASALSGGSSSSCSSSSSLPASPASRVARRTS. The span at 210–221 shows a compositional bias: pro residues; it reads PSPPARSRPPPA. Low complexity predominate over residues 242–257; that stretch reads ALSSESGASSSSYSGE. Ser310 bears the Phosphoserine mark. The stretch at 360–624 forms a coiled coil; the sequence is AAHGQWEQQR…QTRLEKERAQ (265 aa). 4 disordered regions span residues 364-386, 398-425, 448-580, and 651-706; these read QWEQQRVRAEQRREREEREKQRA, VEERRGRRGREEREAARRRQQQCERSEE, DDRL…EREH, and ERSE…LDRK. Residues 368–386 show a composition bias toward basic and acidic residues; sequence QRVRAEQRREREEREKQRA. Composition is skewed to basic and acidic residues over residues 448–529, 548–580, and 651–663; these read DDRL…REGL, QEQRARELRERARREELQGRRAKEAAERKEREH, and ERSEQLSRERRSA. Low complexity predominate over residues 664–674; the sequence is LESARSTARAS. Residues 676–706 show a composition bias toward basic and acidic residues; sequence HVREKVREETNTRSFDRMVREAQLHASLDRK.

The polypeptide is Coiled-coil domain-containing protein 177 (Ccdc177) (Mus musculus (Mouse)).